Consider the following 266-residue polypeptide: Hydroxyethylthiazole kinase (266 aa).

Met-43 is a binding site for substrate. ATP contacts are provided by Arg-119 and Thr-166. Substrate is bound at residue Gly-193.

This sequence belongs to the Thz kinase family. Requires Mg(2+) as cofactor.

The enzyme catalyses 5-(2-hydroxyethyl)-4-methylthiazole + ATP = 4-methyl-5-(2-phosphooxyethyl)-thiazole + ADP + H(+). It functions in the pathway cofactor biosynthesis; thiamine diphosphate biosynthesis; 4-methyl-5-(2-phosphoethyl)-thiazole from 5-(2-hydroxyethyl)-4-methylthiazole: step 1/1. Catalyzes the phosphorylation of the hydroxyl group of 4-methyl-5-beta-hydroxyethylthiazole (THZ). This Methanococcus maripaludis (strain C5 / ATCC BAA-1333) protein is Hydroxyethylthiazole kinase.